The primary structure comprises 102 residues: Aspartyl/glutamyl-tRNA(Asn/Gln) amidotransferase subunit C (102 aa).

The protein belongs to the GatC family. Heterotrimer of A, B and C subunits.

The enzyme catalyses L-glutamyl-tRNA(Gln) + L-glutamine + ATP + H2O = L-glutaminyl-tRNA(Gln) + L-glutamate + ADP + phosphate + H(+). It carries out the reaction L-aspartyl-tRNA(Asn) + L-glutamine + ATP + H2O = L-asparaginyl-tRNA(Asn) + L-glutamate + ADP + phosphate + 2 H(+). Allows the formation of correctly charged Asn-tRNA(Asn) or Gln-tRNA(Gln) through the transamidation of misacylated Asp-tRNA(Asn) or Glu-tRNA(Gln) in organisms which lack either or both of asparaginyl-tRNA or glutaminyl-tRNA synthetases. The reaction takes place in the presence of glutamine and ATP through an activated phospho-Asp-tRNA(Asn) or phospho-Glu-tRNA(Gln). The sequence is that of Aspartyl/glutamyl-tRNA(Asn/Gln) amidotransferase subunit C from Lactobacillus acidophilus (strain ATCC 700396 / NCK56 / N2 / NCFM).